Reading from the N-terminus, the 76-residue chain is Putative defensin-like protein 62 (76 aa).

Residues 1-26 form the signal peptide; that stretch reads MDVTKTYVTIFVVAILTISVLIQIQQ. 4 cysteine pairs are disulfide-bonded: Cys30–Cys71, Cys34–Cys57, Cys43–Cys69, and Cys47–Cys70.

Belongs to the DEFL family.

It is found in the secreted. The sequence is that of Putative defensin-like protein 62 from Arabidopsis thaliana (Mouse-ear cress).